Here is a 127-residue protein sequence, read N- to C-terminus: Riboflavin kinase (127 aa).

Residue 10 to 15 (GLGEGK) coordinates CDP. Thr-39 and Asn-41 together coordinate Mg(2+). FMN-binding residues include Thr-96 and Glu-104. Residue 109–112 (IQLR) coordinates CDP.

Belongs to the archaeal riboflavin kinase family. Requires Mg(2+) as cofactor.

The enzyme catalyses riboflavin + CTP = CDP + FMN + H(+). It functions in the pathway cofactor biosynthesis; FMN biosynthesis; FMN from riboflavin (CTP route): step 1/1. In terms of biological role, catalyzes the CTP-dependent phosphorylation of riboflavin (vitamin B2) to form flavin mononucleotide (FMN). This chain is Riboflavin kinase, found in Methanococcus maripaludis (strain DSM 14266 / JCM 13030 / NBRC 101832 / S2 / LL).